Consider the following 282-residue polypeptide: 3-hydroxyanthranilate 3,4-dioxygenase (282 aa).

Residues 1–160 form a domain A (catalytic) region; it reads MAMAINVKKW…SKQYKSGKPD (160 aa). Position 43 (R43) interacts with O2. Positions 47, 53, and 91 each coordinate Fe cation. A substrate-binding site is contributed by E53. Substrate contacts are provided by R95 and E105. Residues 161 to 177 form a linker region; the sequence is PDQPKAKMPFCLSTEQV. A domain B region spans residues 178–282; the sequence is MEPFSFQHWL…LSTSQVPLPM (105 aa).

The protein belongs to the 3-HAO family. Monomer. The cofactor is Fe(2+).

It is found in the cytoplasm. The protein localises to the cytosol. The enzyme catalyses 3-hydroxyanthranilate + O2 = (2Z,4Z)-2-amino-3-carboxymuconate 6-semialdehyde. It functions in the pathway cofactor biosynthesis; NAD(+) biosynthesis; quinolinate from L-kynurenine: step 3/3. Catalyzes the oxidative ring opening of 3-hydroxyanthranilate to 2-amino-3-carboxymuconate semialdehyde, which spontaneously cyclizes to quinolinate. The protein is 3-hydroxyanthranilate 3,4-dioxygenase (haao) of Xenopus laevis (African clawed frog).